Here is a 206-residue protein sequence, read N- to C-terminus: Imidazoleglycerol-phosphate dehydratase (206 aa).

The protein belongs to the imidazoleglycerol-phosphate dehydratase family.

The protein resides in the cytoplasm. It catalyses the reaction D-erythro-1-(imidazol-4-yl)glycerol 3-phosphate = 3-(imidazol-4-yl)-2-oxopropyl phosphate + H2O. It participates in amino-acid biosynthesis; L-histidine biosynthesis; L-histidine from 5-phospho-alpha-D-ribose 1-diphosphate: step 6/9. This is Imidazoleglycerol-phosphate dehydratase from Leptospira interrogans serogroup Icterohaemorrhagiae serovar copenhageni (strain Fiocruz L1-130).